An 853-amino-acid polypeptide reads, in one-letter code: Deubiquitinase otu (853 aa).

Residues 1–20 are disordered; the sequence is MDMQVQRPITSGSRQAPDPY. The OTU domain occupies 29-150; sequence LYRKHTARDA…ENHFDSVYDV (122 aa). D37 is an active-site residue. S40 serves as the catalytic Nucleophile. The active site involves H143. A Tudor domain is found at 336 to 396; it reads NFKVGAKCKV…HPLPPDEYRP (61 aa). The segment at 396–853 is LC domain; it reads PWSLPFRYHR…AAVYAATRHH (458 aa). The segment covering 460 to 470 has biased composition (basic and acidic residues); the sequence is QDDEQRDHNDP. Disordered stretches follow at residues 460–531, 681–704, 732–794, and 817–853; these read QDDE…YVPM, AVES…LEKS, GPAA…AAQG, and NMDP…TRHH. Low complexity predominate over residues 499-517; that stretch reads SRVQPQNSSSSQNQEVSGS. Residues 747–758 show a composition bias toward polar residues; sequence NGSQFSFYTTPS. Residues 769 to 778 show a composition bias toward pro residues; that stretch reads LLQPPPPPPI. Low complexity-rich tracts occupy residues 783-794 and 820-838; these read AGPPQLGGAAQG and PSAQ…APLS.

As to quaternary structure, self aggregates, forming amyloid-like fibrillar helical structures; protein aggregation is mediated by the C-terminal LC domain, is enhanced by RNA binding and is essential for deubiquitinase activity. Interacts (via OTU domain) with bam (via C-terminus); the interaction enhances otu aggregation and deubiquitinase activity. Together with bam interacts with CycA/cyclin-A; the interaction stabilizes CycA by promoting its deubiquitination. Together with bam interacts with Traf6. Interacts with Hrb27C; the interaction is RNA-independent. Associates (via N-terminus) with mRNP complexes; the interaction is weak. As to expression, expressed at high levels in the ovary, at low levels in the brain and fat body, and at moderate levels in the gut.

It is found in the cytoplasm. The protein localises to the cell cortex. The protein resides in the perinuclear region. With respect to regulation, activated by protein aggregation, which is mediated by the LC domain and enhanced by RNA binding. Its function is as follows. Catalytic component of a deubiquitinase complex consisting of bam and otu. The complex deubiquitinates K63-linked polyubiquitinated proteins; this antagonizes the ubiquitination activity of Traf6 and regulates the IMD immune signaling pathway. Otu-bam deubiquitinase activity is regulated by Traf6 dependent immune signaling regulation of bam expression levels; this forms a feedback loop that regulates the IMD immune signaling pathway and balances gut immune activity during aging. The complex deubiquitinates and stabilizes CycA/cyclin-A to regulate CycA-dependent differentiation. Involved in grk mRNA localization to the dorsal anterior region of the oocyte required for dorsal-ventral axis determination; may function as a ribonuclear protein complex together with sqd and Hrb27C. May regulate actin cytoskeleton organization in differentiating cystocytes during fusome maturation; required for efficient nurse cell cytoplasmic dumping during oogenesis. Essential for female fertility; involved in germ cell proliferation and germ cell differentiation. Involved in the early stages of germ cell proliferation and differentiation during oogenesis. Required for polytene chromosome dispersal in nurse cells during oogenesis. In terms of biological role, involved in the later stages of germ cell proliferation and differentiation during oogenesis. The chain is Deubiquitinase otu from Drosophila melanogaster (Fruit fly).